A 271-amino-acid polypeptide reads, in one-letter code: Putative phosphoenolpyruvate synthase regulatory protein (271 aa).

151 to 158 (GVSRSGKT) provides a ligand contact to ADP.

This sequence belongs to the pyruvate, phosphate/water dikinase regulatory protein family. PSRP subfamily.

It catalyses the reaction [pyruvate, water dikinase] + ADP = [pyruvate, water dikinase]-phosphate + AMP + H(+). It carries out the reaction [pyruvate, water dikinase]-phosphate + phosphate + H(+) = [pyruvate, water dikinase] + diphosphate. Its function is as follows. Bifunctional serine/threonine kinase and phosphorylase involved in the regulation of the phosphoenolpyruvate synthase (PEPS) by catalyzing its phosphorylation/dephosphorylation. The chain is Putative phosphoenolpyruvate synthase regulatory protein from Burkholderia orbicola (strain MC0-3).